The chain runs to 186 residues: M-phase phosphoprotein 6 homolog (186 aa).

Residue S2 is modified to N-acetylserine. Disordered regions lie at residues 22 to 47 (KFGK…VEPI) and 95 to 186 (SNVG…NSKK). Over residues 32-42 (SNSNTPSNINS) the composition is skewed to low complexity. S42 carries the post-translational modification Phosphoserine. Basic and acidic residues predominate over residues 122–147 (SGSRKRKFDEGEQNEDEKRDAKDKEF). S150 carries the phosphoserine modification. Positions 168 to 186 (IKKKKTNHNGKNKNRNSKK) are enriched in basic residues.

Belongs to the MPP6 family. In terms of assembly, associates with the RNA exosome complex.

It is found in the nucleus. Functionally, RNA-binding protein that associates with the RNA exosome complex. Involved in surveillance of pre-rRNAs and pre-mRNAs, and the degradation of cryptic non-coding RNAs (ncRNA) derived from intergenic regions and the ribosomal DNA spacer heterochromatin. This chain is M-phase phosphoprotein 6 homolog (MPP6), found in Saccharomyces cerevisiae (strain ATCC 204508 / S288c) (Baker's yeast).